A 413-amino-acid chain; its full sequence is Multifunctional CCA protein (413 aa).

Residues Gly-8 and Arg-11 each coordinate ATP. Gly-8 and Arg-11 together coordinate CTP. Mg(2+) is bound by residues Asp-21 and Asp-23. Residues Arg-91, Arg-137, and Arg-140 each contribute to the ATP site. Positions 91, 137, and 140 each coordinate CTP. The region spanning Thr-228–Trp-329 is the HD domain.

The protein belongs to the tRNA nucleotidyltransferase/poly(A) polymerase family. Bacterial CCA-adding enzyme type 1 subfamily. As to quaternary structure, monomer. Can also form homodimers and oligomers. It depends on Mg(2+) as a cofactor. Requires Ni(2+) as cofactor.

It carries out the reaction a tRNA precursor + 2 CTP + ATP = a tRNA with a 3' CCA end + 3 diphosphate. It catalyses the reaction a tRNA with a 3' CCA end + 2 CTP + ATP = a tRNA with a 3' CCACCA end + 3 diphosphate. Its function is as follows. Catalyzes the addition and repair of the essential 3'-terminal CCA sequence in tRNAs without using a nucleic acid template. Adds these three nucleotides in the order of C, C, and A to the tRNA nucleotide-73, using CTP and ATP as substrates and producing inorganic pyrophosphate. tRNA 3'-terminal CCA addition is required both for tRNA processing and repair. Also involved in tRNA surveillance by mediating tandem CCA addition to generate a CCACCA at the 3' terminus of unstable tRNAs. While stable tRNAs receive only 3'-terminal CCA, unstable tRNAs are marked with CCACCA and rapidly degraded. The polypeptide is Multifunctional CCA protein (Salmonella choleraesuis (strain SC-B67)).